The primary structure comprises 460 residues: Phosphoglucomutase (460 aa).

Ser103 acts as the Phosphoserine intermediate in catalysis. Residue Ser103 coordinates Mg(2+). Substrate-binding positions include 103–104 (SH) and Lys113. The Mg(2+) site is built by Asp239, Asp241, and Asp243. Residues 243–244 (DR), Thr303, and 322–324 (EMS) each bind substrate.

Belongs to the phosphohexose mutase family. The cofactor is Mg(2+).

Its subcellular location is the cytoplasm. It carries out the reaction alpha-D-glucose 1-phosphate = alpha-D-glucose 6-phosphate. This enzyme participates in both the breakdown and synthesis of glucose. This Neisseria meningitidis serogroup B (strain ATCC BAA-335 / MC58) protein is Phosphoglucomutase (pgm).